Consider the following 617-residue polypeptide: uncharacterized protein (617 aa).

The 102-residue stretch at 33-134 (TEDDFRGEKF…FXNATKQKGS (102 aa)) folds into the B12-binding N-terminal domain. Methylcob(III)alamin contacts are provided by residues E84, 146-150 (GDVHD), H149, S194, T198, and A251. Positions 136–272 (NGKVVIATVK…NPEGRAALWE (137 aa)) constitute a B12-binding domain. An AdoMet activation domain is found at 288 to 617 (SKPLRKQLSI…MMKWLGVAMK (330 aa)). Residues D337, R528, and 583 to 584 (YF) each bind S-adenosyl-L-methionine.

The protein belongs to the vitamin-B12 dependent methionine synthase family.

This is an uncharacterized protein from Haemophilus influenzae (strain ATCC 51907 / DSM 11121 / KW20 / Rd).